A 265-amino-acid chain; its full sequence is Cell division protein DivIB (265 aa).

Topologically, residues 1 to 33 (MRMELKMMGNVNKSNKTNEYILRRHKKKRKKKL) are cytoplasmic. The helical transmembrane segment at 34-54 (IIFSILLISILVTLCFKHPFF) threads the bilayer. Positions 54-122 (FNVKIVEVKD…NKIVIHIKER (69 aa)) constitute a POTRA domain. At 55–265 (NVKIVEVKDN…FKGNPVVFIK (211 aa)) the chain is on the extracellular side.

It belongs to the FtsQ/DivIB family. DivIB subfamily.

The protein resides in the cell membrane. Functionally, cell division protein that may be involved in stabilizing or promoting the assembly of the division complex. In Clostridium tetani (strain Massachusetts / E88), this protein is Cell division protein DivIB.